The sequence spans 511 residues: Cytochrome P450 89A9 (511 aa).

A helical; Signal-anchor for type II membrane protein membrane pass occupies residues 6-26 (IIFLIISSLTFSIFLKLIFFF). A heme-binding site is contributed by Cys-454.

Belongs to the cytochrome P450 family. Heme serves as cofactor.

It is found in the endoplasmic reticulum membrane. The enzyme catalyses primary fluorescent chlorophyll catabolite + reduced [NADPH--hemoprotein reductase] + O2 = primary fluorescent dioxobilin-type chlorophyll catabolite + formate + oxidized [NADPH--hemoprotein reductase] + 2 H(+). It functions in the pathway porphyrin-containing compound metabolism; chlorophyll degradation. Involved in the chlorophyll breakdown by its action in nonpolar primary fluorescent chlorophyll catabolite (pFCC) decarbonylation. Involved in the formation of major chlorophyll breakdown products, including non-fluorescent dioxobilin-type chlorophyll catabolites (NDCCs), during leaf senescence. In Arabidopsis thaliana (Mouse-ear cress), this protein is Cytochrome P450 89A9.